The chain runs to 475 residues: Glycogen synthase (475 aa).

Lys15 is an ADP-alpha-D-glucose binding site.

It belongs to the glycosyltransferase 1 family. Bacterial/plant glycogen synthase subfamily.

The enzyme catalyses [(1-&gt;4)-alpha-D-glucosyl](n) + ADP-alpha-D-glucose = [(1-&gt;4)-alpha-D-glucosyl](n+1) + ADP + H(+). It functions in the pathway glycan biosynthesis; glycogen biosynthesis. Functionally, synthesizes alpha-1,4-glucan chains using ADP-glucose. This Chlamydia felis (strain Fe/C-56) (Chlamydophila felis) protein is Glycogen synthase.